Here is a 1029-residue protein sequence, read N- to C-terminus: Error-prone DNA polymerase (1029 aa).

The protein belongs to the DNA polymerase type-C family. DnaE2 subfamily.

The protein localises to the cytoplasm. The catalysed reaction is DNA(n) + a 2'-deoxyribonucleoside 5'-triphosphate = DNA(n+1) + diphosphate. Functionally, DNA polymerase involved in damage-induced mutagenesis and translesion synthesis (TLS). It is not the major replicative DNA polymerase. This chain is Error-prone DNA polymerase, found in Saccharophagus degradans (strain 2-40 / ATCC 43961 / DSM 17024).